The primary structure comprises 490 residues: Cytochrome P450 2C12, female-specific (490 aa).

Cysteine 435 provides a ligand contact to heme.

The protein belongs to the cytochrome P450 family. Requires heme as cofactor.

It is found in the endoplasmic reticulum membrane. Its subcellular location is the microsome membrane. The enzyme catalyses an organic molecule + reduced [NADPH--hemoprotein reductase] + O2 = an alcohol + oxidized [NADPH--hemoprotein reductase] + H2O + H(+). This P450 is active in 15-beta-hydroxylation of steroid sulfates. The protein is Cytochrome P450 2C12, female-specific (Cyp2c12) of Rattus norvegicus (Rat).